The primary structure comprises 1544 residues: Lysophospholipase NTE1 (1544 aa).

The Cytoplasmic portion of the chain corresponds to 1 to 37 (MSTIEIVSTVAEYTEIHSPVSSKFLLPSARDSSSSIS). The helical transmembrane segment at 38-58 (LFSAIFWFWSWLFFKIMNIFL) threads the bilayer. Residues 59 to 76 (YYIPNIIVNLFSVNFQIT) are Lumenal-facing. The helical transmembrane segment at 77–97 (LSLSSIVITLTGIISFCFLIV) threads the bilayer. At 98–1544 (RYKYLTRYSK…RKSLYRRSSI (1447 aa)) the chain is on the cytoplasmic side. 2 disordered regions span residues 265–312 (RLFS…RNYP) and 424–552 (ESPS…EETE). Over residues 275–310 (NPASNPLSPDNTGSKSFDPLSSGNFNDTSLSSSDRN) the composition is skewed to polar residues. Low complexity predominate over residues 425 to 447 (SPSVSINKTSSSSSSLPKKSTTS). Polar residues-rich tracts occupy residues 448 to 458 (LRPLNRNQSSR) and 517 to 536 (QISS…TTKF). Positions 537 to 546 (ENIRDRTFSD) are enriched in basic and acidic residues. Residues 681 to 811 (SFES…LKSL) and 807 to 960 (KLKS…VANK) each bind a nucleoside 3',5'-cyclic phosphate. The PNPLA domain maps to 1237 to 1401 (LVLGGGGSRG…LDNLPVMEMK (165 aa)). The GXGXXG motif lies at 1241–1246 (GGGSRG). The GXSXG motif lies at 1268–1272 (GTSIG). Residue Ser1270 is the Nucleophile of the active site. Asp1388 acts as the Proton acceptor in catalysis. Residues 1388–1390 (DGG) carry the DGA/G motif.

Belongs to the NTE family.

The protein resides in the endoplasmic reticulum membrane. The catalysed reaction is a 1-acyl-sn-glycero-3-phosphocholine + H2O = sn-glycerol 3-phosphocholine + a fatty acid + H(+). With respect to regulation, inhibited by organophosphorus esters. Its function is as follows. Intracellular phospholipase B that catalyzes the double deacylation of phosphatidylcholine (PC) to glycerophosphocholine (GroPCho). Plays an important role in membrane lipid homeostasis. Responsible for the rapid PC turnover in response to inositol, elevated temperatures, or when choline is present in the growth medium. The sequence is that of Lysophospholipase NTE1 (NTE1) from Debaryomyces hansenii (strain ATCC 36239 / CBS 767 / BCRC 21394 / JCM 1990 / NBRC 0083 / IGC 2968) (Yeast).